The sequence spans 394 residues: Phosphopentomutase (394 aa).

Mn(2+) is bound by residues D15, D288, H293, D329, H330, and H341.

The protein belongs to the phosphopentomutase family. The cofactor is Mn(2+).

The protein resides in the cytoplasm. It catalyses the reaction 2-deoxy-alpha-D-ribose 1-phosphate = 2-deoxy-D-ribose 5-phosphate. The catalysed reaction is alpha-D-ribose 1-phosphate = D-ribose 5-phosphate. The protein operates within carbohydrate degradation; 2-deoxy-D-ribose 1-phosphate degradation; D-glyceraldehyde 3-phosphate and acetaldehyde from 2-deoxy-alpha-D-ribose 1-phosphate: step 1/2. Its function is as follows. Isomerase that catalyzes the conversion of deoxy-ribose 1-phosphate (dRib-1-P) and ribose 1-phosphate (Rib-1-P) to deoxy-ribose 5-phosphate (dRib-5-P) and ribose 5-phosphate (Rib-5-P), respectively. The polypeptide is Phosphopentomutase (Bacillus licheniformis (strain ATCC 14580 / DSM 13 / JCM 2505 / CCUG 7422 / NBRC 12200 / NCIMB 9375 / NCTC 10341 / NRRL NRS-1264 / Gibson 46)).